We begin with the raw amino-acid sequence, 311 residues long: Methionyl-tRNA formyltransferase (311 aa).

112–115 is a (6S)-5,6,7,8-tetrahydrofolate binding site; that stretch reads SLLP.

It belongs to the Fmt family.

The catalysed reaction is L-methionyl-tRNA(fMet) + (6R)-10-formyltetrahydrofolate = N-formyl-L-methionyl-tRNA(fMet) + (6S)-5,6,7,8-tetrahydrofolate + H(+). In terms of biological role, attaches a formyl group to the free amino group of methionyl-tRNA(fMet). The formyl group appears to play a dual role in the initiator identity of N-formylmethionyl-tRNA by promoting its recognition by IF2 and preventing the misappropriation of this tRNA by the elongation apparatus. The protein is Methionyl-tRNA formyltransferase of Sinorhizobium fredii (strain NBRC 101917 / NGR234).